Reading from the N-terminus, the 190-residue chain is Iron-sulfur assembly protein 1 (190 aa).

The disordered stretch occupies residues 49–71; it reads PSLKPSAAGSGSTAPKPVTEREI. Fe cation contacts are provided by Cys-116, Cys-180, and Cys-182.

This sequence belongs to the HesB/IscA family.

Its subcellular location is the mitochondrion matrix. Involved in the assembly of mitochondrial and cytoplasmic iron-sulfur proteins. Probably involved in the binding of an intermediate of Fe/S cluster assembly. The sequence is that of Iron-sulfur assembly protein 1 (isa1) from Schizosaccharomyces pombe (strain 972 / ATCC 24843) (Fission yeast).